A 420-amino-acid chain; its full sequence is Trichothecene biosynthesis transcription regulator TRI10 (420 aa).

Belongs to the TRI10 transcription regulator family.

Its subcellular location is the nucleus. In terms of biological role, transcriptional activator of all of the trichothecene biosynthesis genes. Acts upstream of the cluster-encoded transcription factor TRI6 and is necessary for full expression of both the other trichothecene genes and the genes for the primary metabolic pathway that precedes the trichothecene biosynthetic pathway. The chain is Trichothecene biosynthesis transcription regulator TRI10 from Fusarium sporotrichioides.